Reading from the N-terminus, the 121-residue chain is UPF0295 protein OB0906 (121 aa).

2 helical membrane-spanning segments follow: residues 14-34 (IRTFALILVFAGIITMYGGIL) and 43-63 (VIFFILGTLMVILSCAVYVWI).

The protein belongs to the UPF0295 family.

Its subcellular location is the cell membrane. This Oceanobacillus iheyensis (strain DSM 14371 / CIP 107618 / JCM 11309 / KCTC 3954 / HTE831) protein is UPF0295 protein OB0906.